Reading from the N-terminus, the 327-residue chain is L-lactate dehydrogenase (327 aa).

Residues Val18, Asp39, Lys44, Tyr69, and 83–84 contribute to the NAD(+) site; that span reads GA. Residues Gln86, Arg92, and 124–127 contribute to the substrate site; that span reads NPVD. NAD(+) is bound by residues 122 to 124 and Ser147; that span reads AAN. 152–155 contributes to the substrate binding site; it reads DSAR. The beta-D-fructose 1,6-bisphosphate site is built by Arg157 and His172. The Proton acceptor role is filled by His179. Position 224 is a phosphotyrosine (Tyr224). Thr233 serves as a coordination point for substrate.

Belongs to the LDH/MDH superfamily. LDH family. Homotetramer.

The protein resides in the cytoplasm. The enzyme catalyses (S)-lactate + NAD(+) = pyruvate + NADH + H(+). It functions in the pathway fermentation; pyruvate fermentation to lactate; (S)-lactate from pyruvate: step 1/1. Allosterically activated by fructose 1,6-bisphosphate (FBP). Catalyzes the conversion of lactate to pyruvate. The protein is L-lactate dehydrogenase of Streptococcus uberis (strain ATCC BAA-854 / 0140J).